A 612-amino-acid polypeptide reads, in one-letter code: Dihydroxy-acid dehydratase (612 aa).

D81 provides a ligand contact to Mg(2+). C122 serves as a coordination point for [2Fe-2S] cluster. Mg(2+) is bound by residues D123 and K124. K124 bears the N6-carboxylysine mark. C195 contributes to the [2Fe-2S] cluster binding site. E491 serves as a coordination point for Mg(2+). Catalysis depends on S517, which acts as the Proton acceptor.

It belongs to the IlvD/Edd family. Homodimer. It depends on [2Fe-2S] cluster as a cofactor. The cofactor is Mg(2+).

The enzyme catalyses (2R)-2,3-dihydroxy-3-methylbutanoate = 3-methyl-2-oxobutanoate + H2O. The catalysed reaction is (2R,3R)-2,3-dihydroxy-3-methylpentanoate = (S)-3-methyl-2-oxopentanoate + H2O. It functions in the pathway amino-acid biosynthesis; L-isoleucine biosynthesis; L-isoleucine from 2-oxobutanoate: step 3/4. The protein operates within amino-acid biosynthesis; L-valine biosynthesis; L-valine from pyruvate: step 3/4. In terms of biological role, functions in the biosynthesis of branched-chain amino acids. Catalyzes the dehydration of (2R,3R)-2,3-dihydroxy-3-methylpentanoate (2,3-dihydroxy-3-methylvalerate) into 2-oxo-3-methylpentanoate (2-oxo-3-methylvalerate) and of (2R)-2,3-dihydroxy-3-methylbutanoate (2,3-dihydroxyisovalerate) into 2-oxo-3-methylbutanoate (2-oxoisovalerate), the penultimate precursor to L-isoleucine and L-valine, respectively. This Rhizobium johnstonii (strain DSM 114642 / LMG 32736 / 3841) (Rhizobium leguminosarum bv. viciae) protein is Dihydroxy-acid dehydratase.